The chain runs to 65 residues: Putative cytochrome c oxidase subunit 5C-4 (65 aa).

A helical membrane pass occupies residues 20 to 37; the sequence is EIIYGITLGFAVGGLWKM.

The protein belongs to the cytochrome c oxidase subunit 5C family.

Its subcellular location is the mitochondrion inner membrane. In terms of biological role, this protein is one of the nuclear-coded polypeptide chains of cytochrome c oxidase, the terminal oxidase in mitochondrial electron transport. This Arabidopsis thaliana (Mouse-ear cress) protein is Putative cytochrome c oxidase subunit 5C-4.